The chain runs to 483 residues: Cobyric acid synthase (483 aa).

Residues 251–438 form the GATase cobBQ-type domain; it reads ALIVAVPMLP…LHGVFSADRF (188 aa). C333 serves as the catalytic Nucleophile. Residue H430 is part of the active site.

The protein belongs to the CobB/CobQ family. CobQ subfamily.

Its pathway is cofactor biosynthesis; adenosylcobalamin biosynthesis. Catalyzes amidations at positions B, D, E, and G on adenosylcobyrinic A,C-diamide. NH(2) groups are provided by glutamine, and one molecule of ATP is hydrogenolyzed for each amidation. This Brucella suis biovar 1 (strain 1330) protein is Cobyric acid synthase.